The following is a 306-amino-acid chain: UDP-3-O-acyl-N-acetylglucosamine deacetylase (306 aa).

3 residues coordinate Zn(2+): H79, H239, and D243. H266 acts as the Proton donor in catalysis.

This sequence belongs to the LpxC family. Zn(2+) serves as cofactor.

The enzyme catalyses a UDP-3-O-[(3R)-3-hydroxyacyl]-N-acetyl-alpha-D-glucosamine + H2O = a UDP-3-O-[(3R)-3-hydroxyacyl]-alpha-D-glucosamine + acetate. The protein operates within glycolipid biosynthesis; lipid IV(A) biosynthesis; lipid IV(A) from (3R)-3-hydroxytetradecanoyl-[acyl-carrier-protein] and UDP-N-acetyl-alpha-D-glucosamine: step 2/6. Catalyzes the hydrolysis of UDP-3-O-myristoyl-N-acetylglucosamine to form UDP-3-O-myristoylglucosamine and acetate, the committed step in lipid A biosynthesis. The sequence is that of UDP-3-O-acyl-N-acetylglucosamine deacetylase from Haemophilus ducreyi (strain 35000HP / ATCC 700724).